The following is a 101-amino-acid chain: Glutaredoxin-1 (101 aa).

Residues 5-101 form the Glutaredoxin domain; that stretch reads KDRVEKLIQT…GSLSKMIAAL (97 aa). A disulfide bridge connects residues C25 and C28.

It belongs to the glutaredoxin family.

The protein resides in the cytoplasm. It is found in the cytosol. Functionally, multifunctional enzyme with glutathione-dependent oxidoreductase, glutathione peroxidase and glutathione S-transferase (GST) activity. The disulfide bond functions as an electron carrier in the glutathione-dependent synthesis of deoxyribonucleotides by the enzyme ribonucleotide reductase. In addition, it is also involved in reducing cytosolic protein- and non-protein-disulfides in a coupled system with glutathione reductase. May play a role in protection against oxidative stress caused by superoxide in vivo by regulating the redox state of the protein sulfhydryl groups. The polypeptide is Glutaredoxin-1 (Rhizophagus irregularis (strain DAOM 181602 / DAOM 197198 / MUCL 43194) (Arbuscular mycorrhizal fungus)).